Here is a 213-residue protein sequence, read N- to C-terminus: Major fimbrial subunit (213 aa).

A signal peptide spans 1–20 (MKKTLLGSLILLAFAGNVQA). The cysteines at positions 41 and 81 are disulfide-linked.

The protein belongs to the fimbrial protein family.

The protein resides in the fimbrium. Functionally, mediates adherence to oropharyngeal epithelial cells. Helps the airway colonization process. This Haemophilus influenzae protein is Major fimbrial subunit (hifA).